A 576-amino-acid polypeptide reads, in one-letter code: Proline--tRNA ligase (576 aa).

This sequence belongs to the class-II aminoacyl-tRNA synthetase family. ProS type 1 subfamily. Homodimer.

It localises to the cytoplasm. It catalyses the reaction tRNA(Pro) + L-proline + ATP = L-prolyl-tRNA(Pro) + AMP + diphosphate. Functionally, catalyzes the attachment of proline to tRNA(Pro) in a two-step reaction: proline is first activated by ATP to form Pro-AMP and then transferred to the acceptor end of tRNA(Pro). As ProRS can inadvertently accommodate and process non-cognate amino acids such as alanine and cysteine, to avoid such errors it has two additional distinct editing activities against alanine. One activity is designated as 'pretransfer' editing and involves the tRNA(Pro)-independent hydrolysis of activated Ala-AMP. The other activity is designated 'posttransfer' editing and involves deacylation of mischarged Ala-tRNA(Pro). The misacylated Cys-tRNA(Pro) is not edited by ProRS. The chain is Proline--tRNA ligase from Dechloromonas aromatica (strain RCB).